The following is a 297-amino-acid chain: MTIIYGQDIGLIHQKLSQIKSNSPYKTIWFKDLKQLYDLFSQPLFGSNNEKFIVNNCSFLEKTSLTRQENLCLEKLKTTDVVLTVYTDNPFSGIKTIKSITTVFCDKLDWKSMHKAIGEVCRELNLKLDLEIIDWLANALPLNMGVIYQEINKLSLLGKNEIKDNKLVETVICDYQPVQIYKLTKALTNSQIVKAFKYIDELASTKPNFATQFLEFFSGELLLALMVKSCNPKQLTNINLNVNQFRLIAIQSQYHNFTSKVLVNIINAIQKLDIKLKHNDGFAIPLLKNFALSFFTN.

This sequence belongs to the DNA polymerase HolA subunit family. In terms of assembly, component of the DNA clamp loading complex consisting of tau(3):delta(1):delta'(1). The DNA polymerase III holoenzyme complex contains at least 10 different subunits organized into 3 functionally essential subassemblies: the Pol III core, the beta sliding clamp processivity factor and the clamp-loading complex. The Pol III core (subunits alpha, epsilon and theta) contains the polymerase and the 3'-5' exonuclease proofreading activities. The polymerase is tethered to the template via the dimeric beta sliding clamp processivity factor. The DNA clamp-loading complex assembles the beta sliding clamp onto the primed template and plays a central role in the organization and communication at the replication fork.

The catalysed reaction is DNA(n) + a 2'-deoxyribonucleoside 5'-triphosphate = DNA(n+1) + diphosphate. In terms of biological role, part of the beta sliding clamp loading complex, which hydrolyzes ATP to load the beta clamp onto primed DNA to form the DNA replication pre-initiation complex. DNA polymerase III is a complex, multichain enzyme responsible for most of the replicative synthesis in bacteria. This DNA polymerase also exhibits 3'-5' exonuclease activity. The delta subunit is the wrench that will open the beta subunit dimer. The DNA clamp loading complex (tau(3),delta,delta') is thought to load beta dimers onto DNA by binding ATP which alters the complex's conformation so it can bind beta sliding clamp dimers and open them at one interface. Primed DNA is recognized, ATP is hydrolyzed releasing the clamp loading complex and closing the beta sliding clamp ring around the primed DNA. In Mycoplasma genitalium (strain ATCC 33530 / DSM 19775 / NCTC 10195 / G37) (Mycoplasmoides genitalium), this protein is Probable DNA polymerase III subunit delta.